The sequence spans 602 residues: Elongation factor 4 (602 aa).

The tr-type G domain maps to 7 to 189; that stretch reads SRLRNFCIIA…AVVERVPPPK (183 aa). GTP is bound by residues 19–24 and 136–139; these read DHGKST and NKVD.

Belongs to the TRAFAC class translation factor GTPase superfamily. Classic translation factor GTPase family. LepA subfamily.

Its subcellular location is the cell inner membrane. It carries out the reaction GTP + H2O = GDP + phosphate + H(+). In terms of biological role, required for accurate and efficient protein synthesis under certain stress conditions. May act as a fidelity factor of the translation reaction, by catalyzing a one-codon backward translocation of tRNAs on improperly translocated ribosomes. Back-translocation proceeds from a post-translocation (POST) complex to a pre-translocation (PRE) complex, thus giving elongation factor G a second chance to translocate the tRNAs correctly. Binds to ribosomes in a GTP-dependent manner. The protein is Elongation factor 4 of Prochlorococcus marinus (strain MIT 9211).